A 55-amino-acid chain; its full sequence is uncharacterized protein (55 aa).

This is an uncharacterized protein from Escherichia coli (Bacteriophage T4).